The chain runs to 304 residues: Ribonuclease Z (304 aa).

Residues His61, His63, Asp65, His66, His138, Asp206, and His265 each contribute to the Zn(2+) site. The active-site Proton acceptor is Asp65.

Belongs to the RNase Z family. As to quaternary structure, homodimer. The cofactor is Zn(2+).

The enzyme catalyses Endonucleolytic cleavage of RNA, removing extra 3' nucleotides from tRNA precursor, generating 3' termini of tRNAs. A 3'-hydroxy group is left at the tRNA terminus and a 5'-phosphoryl group is left at the trailer molecule.. In terms of biological role, zinc phosphodiesterase, which displays some tRNA 3'-processing endonuclease activity. Probably involved in tRNA maturation, by removing a 3'-trailer from precursor tRNA. This chain is Ribonuclease Z, found in Lachnospira eligens (strain ATCC 27750 / DSM 3376 / VPI C15-48 / C15-B4) (Eubacterium eligens).